Here is a 789-residue protein sequence, read N- to C-terminus: Phenylalanine--tRNA ligase beta subunit (789 aa).

The tRNA-binding domain maps to Lys-38 to Phe-151. Residues His-398 to Glu-474 form the B5 domain. Mg(2+) is bound by residues Asp-452, Asp-458, Glu-461, and Glu-462. An FDX-ACB domain is found at Leu-694–Arg-787.

Belongs to the phenylalanyl-tRNA synthetase beta subunit family. Type 1 subfamily. As to quaternary structure, tetramer of two alpha and two beta subunits. Mg(2+) is required as a cofactor.

It is found in the cytoplasm. It catalyses the reaction tRNA(Phe) + L-phenylalanine + ATP = L-phenylalanyl-tRNA(Phe) + AMP + diphosphate + H(+). The sequence is that of Phenylalanine--tRNA ligase beta subunit from Ehrlichia ruminantium (strain Welgevonden).